A 125-amino-acid chain; its full sequence is Cyclin-dependent protein kinase inhibitor SMR16 (125 aa).

Probable cyclin-dependent protein kinase (CDK) inhibitor that functions as a repressor of mitosis in the endoreduplication cell cycle. In Arabidopsis thaliana (Mouse-ear cress), this protein is Cyclin-dependent protein kinase inhibitor SMR16.